The following is a 336-amino-acid chain: Fructose-1,6-bisphosphatase class 1 (336 aa).

The Mg(2+) site is built by glutamate 90, aspartate 112, leucine 114, and aspartate 115. Residues 115-118, asparagine 207, and lysine 273 each bind substrate; that span reads DGSS. Glutamate 279 provides a ligand contact to Mg(2+).

The protein belongs to the FBPase class 1 family. As to quaternary structure, homotetramer. Requires Mg(2+) as cofactor.

Its subcellular location is the cytoplasm. It catalyses the reaction beta-D-fructose 1,6-bisphosphate + H2O = beta-D-fructose 6-phosphate + phosphate. Its pathway is carbohydrate biosynthesis; gluconeogenesis. This is Fructose-1,6-bisphosphatase class 1 from Xanthomonas axonopodis pv. citri (strain 306).